The chain runs to 379 residues: GTP cyclohydrolase 1 type 2 homolog (379 aa).

A divalent metal cation is bound by residues His64, His65, Asp103, His333, and Glu337.

This sequence belongs to the GTP cyclohydrolase I type 2/NIF3 family. Homohexamer.

The sequence is that of GTP cyclohydrolase 1 type 2 homolog from Mycobacterium bovis (strain ATCC BAA-935 / AF2122/97).